The following is a 264-amino-acid chain: AA9 family lytic polysaccharide monooxygenase A (264 aa).

An N-terminal signal peptide occupies residues 1–18; that stretch reads MHFAALAILSSLVASAAA. Histidine 19 contacts Cu(2+). Residues asparagine 51 and asparagine 75 are each glycosylated (N-linked (GlcNAc...) asparagine). The cysteines at positions 59 and 182 are disulfide-linked. A Cu(2+)-binding site is contributed by histidine 96. N-linked (GlcNAc...) asparagine glycosylation is present at asparagine 110. Histidine 162 is a binding site for O2. Tyrosine 179 lines the Cu(2+) pocket. N-linked (GlcNAc...) asparagine glycosylation is found at asparagine 218 and asparagine 251.

Belongs to the polysaccharide monooxygenase AA9 family. Cu(2+) serves as cofactor.

It localises to the secreted. It carries out the reaction [(1-&gt;4)-beta-D-glucosyl]n+m + reduced acceptor + O2 = 4-dehydro-beta-D-glucosyl-[(1-&gt;4)-beta-D-glucosyl]n-1 + [(1-&gt;4)-beta-D-glucosyl]m + acceptor + H2O.. In terms of biological role, lytic polysaccharide monooxygenase (LPMO) that depolymerizes crystalline and amorphous polysaccharides via the oxidation of scissile alpha- or beta-(1-4)-glycosidic bonds, yielding C4 oxidation products. Catalysis by LPMOs requires the reduction of the active-site copper from Cu(II) to Cu(I) by a reducing agent and H(2)O(2) or O(2) as a cosubstrate. Active on cellulose and cello-oligosaccharides, as well as plant cell wall-derived hemicellulosic polysaccharides. Also active on cello-oligosaccharides such as cellohexaose, cellopentaose or cellotetraose. The sequence is that of AA9 family lytic polysaccharide monooxygenase A from Phanerochaete carnosa (strain HHB-10118-sp) (White-rot fungus).